The chain runs to 299 residues: Oxygen-dependent coproporphyrinogen-III oxidase (299 aa).

Ser-92 is a substrate binding site. Residues His-96 and His-106 each coordinate a divalent metal cation. Residue His-106 is the Proton donor of the active site. A substrate-binding site is contributed by 108-110 (NVR). Residues His-145 and His-175 each contribute to the a divalent metal cation site. The tract at residues 239–274 (YVEFNLVYDRGTLFGLQSGGRAESILMSLPPQVRWE) is important for dimerization. Residue 257 to 259 (GGR) participates in substrate binding.

The protein belongs to the aerobic coproporphyrinogen-III oxidase family. In terms of assembly, homodimer. Requires a divalent metal cation as cofactor.

It localises to the cytoplasm. It carries out the reaction coproporphyrinogen III + O2 + 2 H(+) = protoporphyrinogen IX + 2 CO2 + 2 H2O. The protein operates within porphyrin-containing compound metabolism; protoporphyrin-IX biosynthesis; protoporphyrinogen-IX from coproporphyrinogen-III (O2 route): step 1/1. Involved in the heme biosynthesis. Catalyzes the aerobic oxidative decarboxylation of propionate groups of rings A and B of coproporphyrinogen-III to yield the vinyl groups in protoporphyrinogen-IX. The protein is Oxygen-dependent coproporphyrinogen-III oxidase of Xanthomonas campestris pv. campestris (strain 8004).